Reading from the N-terminus, the 184-residue chain is Endothelial cell-specific molecule 1 (184 aa).

The first 19 residues, 1 to 19, serve as a signal peptide directing secretion; that stretch reads MKSVLLLTTLLVPAHLVAA. In terms of domain architecture, IGFBP N-terminal spans 24-102; sequence YAVDCPQHCD…GEEFGICKDC (79 aa). Cystine bridges form between C28–C51, C32–C53, C37–C54, C43–C57, C65–C83, and C77–C99. O-linked (Xyl...) (chondroitin sulfate) serine glycosylation occurs at S156.

In terms of assembly, monomer. May contain intrachain disulfide bonds. Post-translationally, O-glycosylated; contains chondroitin sulfate and dermatan sulfate. Expressed in lung, on the vascular capillary network within alveolar walls, and also at lower level in kidney.

It is found in the secreted. Functionally, involved in angiogenesis; promotes angiogenic sprouting. May have potent implications in lung endothelial cell-leukocyte interactions. The chain is Endothelial cell-specific molecule 1 (ESM1) from Homo sapiens (Human).